Consider the following 1938-residue polypeptide: Myosin-13 (1938 aa).

Residues 33-82 (DSKKACFVADNKEMYVKGMIQTRENDKVIVKTLDDRMLTLNNDQVFPMNP) form the Myosin N-terminal SH3-like domain. Residues 86–782 (DKIEDMAMMT…LLGLLEEMRD (697 aa)) enclose the Myosin motor domain. An N6,N6,N6-trimethyllysine modification is found at lysine 130. 179–186 (GESGAGKT) is an ATP binding site. 2 actin-binding regions span residues 659–681 (LNKLMTNLRSTHPHFVRCLIPNE) and 761–775 (RFGNTKVFFKAGLLG). The IQ domain occupies 785-814 (LVTLMTSTQAVCRGYLMRVEFKKMMERRDS). The stretch at 843-1938 (LLKSAEAEKE…RDVGSQKMEE (1096 aa)) forms a coiled coil. Positions 1917 to 1938 (AESQVNKLRAKSRDVGSQKMEE) are disordered. Over residues 1927-1938 (KSRDVGSQKMEE) the composition is skewed to basic and acidic residues.

This sequence belongs to the TRAFAC class myosin-kinesin ATPase superfamily. Myosin family. As to quaternary structure, muscle myosin is a hexameric protein that consists of 2 heavy chain subunits (MHC), 2 alkali light chain subunits (MLC) and 2 regulatory light chain subunits (MLC-2). As to expression, specifically expressed in extraocular and laryngeal muscles.

The protein localises to the cytoplasm. It localises to the myofibril. Functionally, fast twitching myosin mediating the high-velocity and low-tension contractions of specific striated muscles. This chain is Myosin-13 (MYH13), found in Homo sapiens (Human).